We begin with the raw amino-acid sequence, 514 residues long: Photosystem II CP47 reaction center protein (514 aa).

The next 6 membrane-spanning stretches (helical) occupy residues 21 to 36 (AVHL…WAGS), 109 to 123 (IVLS…VWHW), 148 to 164 (GGHL…FGTF), 211 to 226 (IAAG…FHLT), 245 to 260 (ALAS…AFVV), and 465 to 480 (CFAL…HGAR).

Belongs to the PsbB/PsbC family. PsbB subfamily. PSII is composed of 1 copy each of membrane proteins PsbA, PsbB, PsbC, PsbD, PsbE, PsbF, PsbH, PsbI, PsbJ, PsbK, PsbL, PsbM, PsbT, PsbX, PsbY, PsbZ, Psb30/Ycf12, peripheral proteins PsbO, CyanoQ (PsbQ), PsbU, PsbV and a large number of cofactors. It forms dimeric complexes. Binds multiple chlorophylls. PSII binds additional chlorophylls, carotenoids and specific lipids. serves as cofactor.

The protein resides in the cellular thylakoid membrane. In terms of biological role, one of the components of the core complex of photosystem II (PSII). It binds chlorophyll and helps catalyze the primary light-induced photochemical processes of PSII. PSII is a light-driven water:plastoquinone oxidoreductase, using light energy to abstract electrons from H(2)O, generating O(2) and a proton gradient subsequently used for ATP formation. The chain is Photosystem II CP47 reaction center protein from Prochlorothrix hollandica.